Reading from the N-terminus, the 300-residue chain is Lysophosphatidic acid:oleoyl-CoA acyltransferase 1 (300 aa).

Residues L33–L53 form a helical membrane-spanning segment. Positions C101–D106 match the HXXXXD motif motif.

The protein belongs to the 1-acyl-sn-glycerol-3-phosphate acyltransferase family.

It localises to the lipid droplet. Its subcellular location is the endoplasmic reticulum membrane. The enzyme catalyses a 1-acyl-sn-glycero-3-phosphate + an acyl-CoA = a 1,2-diacyl-sn-glycero-3-phosphate + CoA. It catalyses the reaction 1-hexadecanoyl-sn-glycero-3-phosphate + (9Z)-octadecenoyl-CoA = 1-hexadecanoyl-2-(9Z-octadecenoyl)-sn-glycero-3-phosphate + CoA. Its function is as follows. Acyl-CoA-dependent lysophosphatidic acid acyltransferase with preference for oleoyl-CoA. Involved in triacylglyceride homeostasis and lipid droplet formation. Involved in vacuolar protein sorting. In Saccharomyces cerevisiae (strain ATCC 204508 / S288c) (Baker's yeast), this protein is Lysophosphatidic acid:oleoyl-CoA acyltransferase 1.